The sequence spans 463 residues: MSEPIKNIVLVGRTGNGKSSTGNTLLGTKQFKSKNQAKGVTMICEMYRAAIQDGPIINVIDTPGLCDSFVPGDDISNEIINCLTMAEEGIHAVLLVLSARGRISKEEESTVNTLQCIFGSQILDYCIVVFTGGDDLEEDDQTLDDYFRAGCPEFLTKVLRLCGGRKVLFDNKSKDEKKKVEQVKQLLARVENVGEQTGGIPYTYQLHRKIKEENDERLREEERVIESKNRAEAELAEMQQNLLMEKEKLQMEEAKNKQLIAQAEANEKLMEQERAKNRAETELAAVMVEKLQMEEEKNKQLIAQANRMICARDLNIEWSHSEEHWKWVNLDHNISSNTFVEVAELLGVYWFDVSGSLDTTEMAPWTHYEVLFVVNLKDSAFKWNAAVKMNLFYINSRPGGPGTQERAVDMRQHIGKGWVTIHAGEFITTPENVGLIGFRMSEVDSGDNRGGLIVKGVLIRPIN.

Residues 3 to 211 (EPIKNIVLVG…YTYQLHRKIK (209 aa)) enclose the AIG1-type G domain. The segment at 12–19 (GRTGNGKS) is G1. Residues 12–20 (GRTGNGKSS) and Ser-33 contribute to the GTP site. The G2 stretch occupies residues 39–43 (GVTMI). The segment at 61–64 (DTPG) is G3. Positions 131–134 (TGGD) are G4. Positions 170–172 (DNK) are G5. Asn-171 is a GTP binding site. Positions 173-308 (SKDEKKKVEQ…KQLIAQANRM (136 aa)) form a coiled coil.

Belongs to the TRAFAC class TrmE-Era-EngA-EngB-Septin-like GTPase superfamily. AIG1/Toc34/Toc159-like paraseptin GTPase family. IAN subfamily. As to expression, expressed in radicles of the germinating seeds.

The chain is Immune-associated nucleotide-binding protein 10 from Arabidopsis thaliana (Mouse-ear cress).